The primary structure comprises 242 residues: DNA repair protein RecO (242 aa).

The protein belongs to the RecO family. As to quaternary structure, monomer.

Its function is as follows. Involved in DNA repair and RecF pathway recombination. The chain is DNA repair protein RecO from Salmonella dublin (strain CT_02021853).